A 202-amino-acid chain; its full sequence is Large ribosomal subunit protein bL25 (202 aa).

This sequence belongs to the bacterial ribosomal protein bL25 family. CTC subfamily. Part of the 50S ribosomal subunit; part of the 5S rRNA/L5/L18/L25 subcomplex. Contacts the 5S rRNA. Binds to the 5S rRNA independently of L5 and L18.

Its function is as follows. This is one of the proteins that binds to the 5S RNA in the ribosome where it forms part of the central protuberance. This Clostridium perfringens (strain ATCC 13124 / DSM 756 / JCM 1290 / NCIMB 6125 / NCTC 8237 / Type A) protein is Large ribosomal subunit protein bL25.